We begin with the raw amino-acid sequence, 44 residues long: U17-ctenitoxin-Co1a (44 aa).

4 disulfide bridges follow: Cys-3–Cys-20, Cys-10–Cys-26, Cys-19–Cys-40, and Cys-28–Cys-38.

In terms of tissue distribution, expressed by the venom gland.

The protein localises to the secreted. Omega-agatoxins are antagonists of voltage-sensitive calcium channels (Cav). Toxic to mice by intracerebroventricular injection. The sequence is that of U17-ctenitoxin-Co1a from Ctenus ornatus (Brazilian spider).